The sequence spans 445 residues: Argininosuccinate synthase (445 aa).

ATP-binding positions include Ala-17–Ser-25 and Ala-43. Tyr-99 lines the L-citrulline pocket. Positions 129 and 131 each coordinate ATP. Positions 131, 135, and 136 each coordinate L-aspartate. Asn-135 contributes to the L-citrulline binding site. Residue Asp-136 participates in ATP binding. Residues Arg-139 and Ser-192 each coordinate L-citrulline. Position 194 (Asp-194) interacts with ATP. Thr-201, Glu-203, and Glu-280 together coordinate L-citrulline.

The protein belongs to the argininosuccinate synthase family. Type 2 subfamily. As to quaternary structure, homotetramer.

Its subcellular location is the cytoplasm. The enzyme catalyses L-citrulline + L-aspartate + ATP = 2-(N(omega)-L-arginino)succinate + AMP + diphosphate + H(+). It functions in the pathway amino-acid biosynthesis; L-arginine biosynthesis; L-arginine from L-ornithine and carbamoyl phosphate: step 2/3. This Burkholderia cenocepacia (strain HI2424) protein is Argininosuccinate synthase.